The chain runs to 189 residues: Elongation factor P (189 aa).

This sequence belongs to the elongation factor P family.

It is found in the cytoplasm. It functions in the pathway protein biosynthesis; polypeptide chain elongation. In terms of biological role, involved in peptide bond synthesis. Stimulates efficient translation and peptide-bond synthesis on native or reconstituted 70S ribosomes in vitro. Probably functions indirectly by altering the affinity of the ribosome for aminoacyl-tRNA, thus increasing their reactivity as acceptors for peptidyl transferase. This Pseudomonas syringae pv. tomato (strain ATCC BAA-871 / DC3000) protein is Elongation factor P.